A 416-amino-acid polypeptide reads, in one-letter code: Inositol polyphosphate multikinase (416 aa).

Positions 1–38 are disordered; that stretch reads MATEPPSPLRVEAPGPPEMRTSPAIESTPEGTPQPAGG. Ala-2 is modified (N-acetylalanine). A Phosphoserine modification is found at Ser-7. Residue Lys-75 participates in ATP binding. Position 82 (Arg-82) interacts with substrate. ATP contacts are provided by residues 131 to 133 and Asp-144; that span reads EDV. Residues Lys-146, 160-167, and Gln-196 contribute to the substrate site; that span reads KIQQQVSK. The Nuclear localization signal motif lies at 320 to 330; that stretch reads RHRKIYTKKHH. Asp-385 provides a ligand contact to ATP. His-388 serves as a coordination point for substrate.

This sequence belongs to the inositol phosphokinase (IPK) family. Mg(2+) serves as cofactor. As to expression, ubiquitous, with the highest expression in skeletal muscle, liver, placenta, lung, peripheral blood leukocytes, kidney, spleen and colon.

The protein localises to the nucleus. The enzyme catalyses 1D-myo-inositol 1,4,5-trisphosphate + 2 ATP = 1D-myo-inositol 1,3,4,5,6-pentakisphosphate + 2 ADP + 2 H(+). The catalysed reaction is 1D-myo-inositol 1,3,4,6-tetrakisphosphate + ATP = 1D-myo-inositol 1,3,4,5,6-pentakisphosphate + ADP + H(+). It carries out the reaction 1-octadecanoyl-2-(5Z,8Z,11Z,14Z)-eicosatetraenoyl-sn-glycero-3-phospho-1D-myo-inositol 4,5-bisphosphate + ATP = 1-octadecanoyl-2-(5Z,8Z,11Z,14Z-eicosatetraenoyl)-sn-glycero-3-phospho-(1D-myo-inositol 3,4,5-triphosphate) + ADP + H(+). It catalyses the reaction a 1,2-diacyl-sn-glycero-3-phospho-(1D-myo-inositol-4,5-bisphosphate) + ATP = a 1,2-diacyl-sn-glycero-3-phospho-(1D-myo-inositol-3,4,5-trisphosphate) + ADP + H(+). The enzyme catalyses 1D-myo-inositol 1,4,5,6-tetrakisphosphate + ATP = 1D-myo-inositol 1,3,4,5,6-pentakisphosphate + ADP + H(+). Its pathway is phospholipid metabolism; phosphatidylinositol metabolism. With respect to regulation, inhibited by flavonoids that occupy the ATP-binding pocket. Inhibited by myricetin, quercetin, luteolin, kaempferol, isorhamnetin and diosmetin, and to a lesser degree by rhamnetin and apigenin. Its function is as follows. Inositol phosphate kinase with a broad substrate specificity. Phosphorylates inositol 1,4,5-trisphosphate (Ins(1,4,5)P3) first to inositol 1,3,4,5-tetrakisphosphate and then to inositol 1,3,4,5,6-pentakisphosphate (Ins(1,3,4,5,6)P5). Phosphorylates inositol 1,3,4,6-tetrakisphosphate (Ins(1,3,4,6)P4). Phosphorylates inositol 1,4,5,6-tetrakisphosphate (Ins(1,4,5,6)P4). Phosphorylates glycero-3-phospho-1D-myo-inositol 4,5-bisphosphate to glycero-3-phospho-1D-myo-inositol 3,4,5-trisphosphate. Plays an important role in MLKL-mediated necroptosis via its role in the biosynthesis of inositol pentakisphosphate (InsP5) and inositol hexakisphosphate (InsP6). Binding of these highly phosphorylated inositol phosphates to MLKL mediates the release of an N-terminal auto-inhibitory region, leading to activation of the kinase. Essential for activated phospho-MLKL to oligomerize and localize to the cell membrane during necroptosis. Required for normal embryonic development, probably via its role in the biosynthesis of inositol 1,3,4,5,6-pentakisphosphate (Ins(1,3,4,5,6)P5) and inositol hexakisphosphate (InsP6). The protein is Inositol polyphosphate multikinase (IPMK) of Homo sapiens (Human).